Reading from the N-terminus, the 1770-residue chain is Transposon Ty2-LR1 Gag-Pol polyprotein (1770 aa).

3 stretches are compositionally biased toward polar residues: residues 1-11 (MESQQLHQNPH), 19-39 (ASVT…SASN), and 49-60 (KVNSQQETTPGT). 2 disordered regions span residues 1 to 86 (MESQ…GQYQ) and 359 to 453 (QHSE…LPDH). The segment at 295 to 397 (ENNINVSDRL…SSKPRAAKAH (103 aa)) is RNA-binding. The segment covering 369-381 (TSPNTTNTKVTTR) has biased composition (low complexity). 2 stretches are compositionally biased toward polar residues: residues 399–408 (IATSSKFSRV) and 415–435 (ESTV…GQQQ). The active-site For protease activity; shared with dimeric partner is the D457. The interval 579 to 636 (NVNKSKSVNKYPYPLIHRMLGHANFRSIQKSLKKNAVTYLKESDIEWSNASTYQCPDC) is integrase-type zinc finger-like. The 176-residue stretch at 656-831 (ESYEPFQYLH…AGLDITTILP (176 aa)) folds into the Integrase catalytic domain. D667 and D732 together coordinate Mg(2+). Disordered stretches follow at residues 1005 to 1038 (GGTI…MIDL), 1058 to 1135 (GTEE…KSSK), 1146 to 1165 (LPLP…VSKD), and 1170 to 1205 (HSRQ…TEIE). 2 stretches are compositionally biased toward polar residues: residues 1009-1024 (ESDT…FTAR) and 1065-1082 (QRNS…STPS). The segment covering 1151–1165 (LTHKSPTDTSDVSKD) has biased composition (basic and acidic residues). A Bipartite nuclear localization signal motif is present at residues 1193–1227 (KKRSLEDNETEIEVSRDTWNNKNMRSLEPPRSKKR). Residues 1353-1491 (NDYYITQLDI…DILGLEIKYQ (139 aa)) form the Reverse transcriptase Ty1/copia-type domain. Mg(2+) contacts are provided by D1361, D1442, D1443, D1625, E1667, and D1700. In terms of domain architecture, RNase H Ty1/copia-type spans 1625-1767 (DASYGNQPYY…IKTFKLLTNK (143 aa)).

The capsid protein forms a homotrimer, from which the VLPs are assembled. The protease is a homodimer, whose active site consists of two apposed aspartic acid residues. Initially, virus-like particles (VLPs) are composed of the structural unprocessed proteins Gag and Gag-Pol, and also contain the host initiator methionine tRNA (tRNA(i)-Met) which serves as a primer for minus-strand DNA synthesis, and a dimer of genomic Ty RNA. Processing of the polyproteins occurs within the particle and proceeds by an ordered pathway, called maturation. First, the protease (PR) is released by autocatalytic cleavage of the Gag-Pol polyprotein, and this cleavage is a prerequisite for subsequent processing at the remaining sites to release the mature structural and catalytic proteins. Maturation takes place prior to the RT reaction and is required to produce transposition-competent VLPs.

It localises to the cytoplasm. The protein resides in the nucleus. The catalysed reaction is DNA(n) + a 2'-deoxyribonucleoside 5'-triphosphate = DNA(n+1) + diphosphate. It carries out the reaction Endonucleolytic cleavage to 5'-phosphomonoester.. Its function is as follows. Capsid protein (CA) is the structural component of the virus-like particle (VLP), forming the shell that encapsulates the retrotransposons dimeric RNA genome. The particles are assembled from trimer-clustered units and there are holes in the capsid shells that allow for the diffusion of macromolecules. CA also has nucleocapsid-like chaperone activity, promoting primer tRNA(i)-Met annealing to the multipartite primer-binding site (PBS), dimerization of Ty2 RNA and initiation of reverse transcription. In terms of biological role, the aspartyl protease (PR) mediates the proteolytic cleavages of the Gag and Gag-Pol polyproteins after assembly of the VLP. Reverse transcriptase/ribonuclease H (RT) is a multifunctional enzyme that catalyzes the conversion of the retro-elements RNA genome into dsDNA within the VLP. The enzyme displays a DNA polymerase activity that can copy either DNA or RNA templates, and a ribonuclease H (RNase H) activity that cleaves the RNA strand of RNA-DNA heteroduplexes during plus-strand synthesis and hydrolyzes RNA primers. The conversion leads to a linear dsDNA copy of the retrotransposon that includes long terminal repeats (LTRs) at both ends. Functionally, integrase (IN) targets the VLP to the nucleus, where a subparticle preintegration complex (PIC) containing at least integrase and the newly synthesized dsDNA copy of the retrotransposon must transit the nuclear membrane. Once in the nucleus, integrase performs the integration of the dsDNA into the host genome. The protein is Transposon Ty2-LR1 Gag-Pol polyprotein (TY2B-LR1) of Saccharomyces cerevisiae (strain ATCC 204508 / S288c) (Baker's yeast).